Here is a 323-residue protein sequence, read N- to C-terminus: Acetyl-coenzyme A carboxylase carboxyl transferase subunit alpha (323 aa).

The CoA carboxyltransferase C-terminal domain maps to 39–293 (RLAGKSQQLT…KRSLAESLRQ (255 aa)).

The protein belongs to the AccA family. In terms of assembly, acetyl-CoA carboxylase is a heterohexamer composed of biotin carboxyl carrier protein (AccB), biotin carboxylase (AccC) and two subunits each of ACCase subunit alpha (AccA) and ACCase subunit beta (AccD).

It localises to the cytoplasm. The enzyme catalyses N(6)-carboxybiotinyl-L-lysyl-[protein] + acetyl-CoA = N(6)-biotinyl-L-lysyl-[protein] + malonyl-CoA. It functions in the pathway lipid metabolism; malonyl-CoA biosynthesis; malonyl-CoA from acetyl-CoA: step 1/1. Component of the acetyl coenzyme A carboxylase (ACC) complex. First, biotin carboxylase catalyzes the carboxylation of biotin on its carrier protein (BCCP) and then the CO(2) group is transferred by the carboxyltransferase to acetyl-CoA to form malonyl-CoA. This chain is Acetyl-coenzyme A carboxylase carboxyl transferase subunit alpha, found in Cupriavidus metallidurans (strain ATCC 43123 / DSM 2839 / NBRC 102507 / CH34) (Ralstonia metallidurans).